Consider the following 523-residue polypeptide: 2-isopropylmalate synthase (523 aa).

Residues 5–267 (VIIFDTTLRD…ETGINAKEIH (263 aa)) form the Pyruvate carboxyltransferase domain. Asp-14, His-202, His-204, and Asn-238 together coordinate Mn(2+). Residues 392-523 (ELQQLVVHSD…QQNKQEFGSV (132 aa)) are regulatory domain.

Belongs to the alpha-IPM synthase/homocitrate synthase family. LeuA type 1 subfamily. Homodimer. Mn(2+) serves as cofactor.

It localises to the cytoplasm. The enzyme catalyses 3-methyl-2-oxobutanoate + acetyl-CoA + H2O = (2S)-2-isopropylmalate + CoA + H(+). The protein operates within amino-acid biosynthesis; L-leucine biosynthesis; L-leucine from 3-methyl-2-oxobutanoate: step 1/4. Functionally, catalyzes the condensation of the acetyl group of acetyl-CoA with 3-methyl-2-oxobutanoate (2-ketoisovalerate) to form 3-carboxy-3-hydroxy-4-methylpentanoate (2-isopropylmalate). This is 2-isopropylmalate synthase from Shewanella halifaxensis (strain HAW-EB4).